Here is a 583-residue protein sequence, read N- to C-terminus: Putative rhophilin-2-like protein RHPN2P1 (583 aa).

Positions 26–375 constitute a BRO1 domain; that stretch reads PLIPLGLKET…RLTYAQHQED (350 aa). The PDZ domain maps to 412–490; it reads RSNRFTAEEG…DEIEMKVVSL (79 aa).

The protein is Putative rhophilin-2-like protein RHPN2P1 (RHPN2P1) of Homo sapiens (Human).